The sequence spans 508 residues: Flavonoid 3',5'-hydroxylase 2 (508 aa).

A heme-binding site is contributed by Cys443.

The protein belongs to the cytochrome P450 family. Heme is required as a cofactor. In terms of tissue distribution, flowers.

It is found in the microsome. The protein localises to the endoplasmic reticulum. The catalysed reaction is a 3',5'-unsubstituted flavanone + 2 reduced [NADPH--hemoprotein reductase] + 2 O2 = a 3',5'-dihydroxyflavanone + 2 oxidized [NADPH--hemoprotein reductase] + 2 H2O + 2 H(+). It functions in the pathway pigment biosynthesis; anthocyanin biosynthesis. Catalyzes the 3'5'-hydroxylation of naringenin and eriodictyol to form 5,7,3,'4',5'-pentahydroxyflavanone and 3',5'-hydroxylation of dihydrokaempferol and dihydroquercetin to form dihydromyricetin. The chain is Flavonoid 3',5'-hydroxylase 2 (CYP75A3) from Petunia hybrida (Petunia).